The following is a 153-amino-acid chain: 6,7-dimethyl-8-ribityllumazine synthase (153 aa).

5-amino-6-(D-ribitylamino)uracil contacts are provided by residues phenylalanine 22, 56–58, and 80–82; these read AFE and TVI. Residue 85–86 participates in (2S)-2-hydroxy-3-oxobutyl phosphate binding; it reads ST. The active-site Proton donor is histidine 88. Phenylalanine 113 contributes to the 5-amino-6-(D-ribitylamino)uracil binding site. Arginine 127 lines the (2S)-2-hydroxy-3-oxobutyl phosphate pocket.

The protein belongs to the DMRL synthase family. In terms of assembly, forms an icosahedral capsid composed of 60 subunits, arranged as a dodecamer of pentamers.

The catalysed reaction is (2S)-2-hydroxy-3-oxobutyl phosphate + 5-amino-6-(D-ribitylamino)uracil = 6,7-dimethyl-8-(1-D-ribityl)lumazine + phosphate + 2 H2O + H(+). Its pathway is cofactor biosynthesis; riboflavin biosynthesis; riboflavin from 2-hydroxy-3-oxobutyl phosphate and 5-amino-6-(D-ribitylamino)uracil: step 1/2. Catalyzes the formation of 6,7-dimethyl-8-ribityllumazine by condensation of 5-amino-6-(D-ribitylamino)uracil with 3,4-dihydroxy-2-butanone 4-phosphate. This is the penultimate step in the biosynthesis of riboflavin. The protein is 6,7-dimethyl-8-ribityllumazine synthase of Actinobacillus pleuropneumoniae serotype 3 (strain JL03).